A 372-amino-acid polypeptide reads, in one-letter code: Oxoglutarate-dependent flavonoid 7-O-demethylase 1 (372 aa).

Residues 221-321 (GIQALRMNYY…RLSVAAFLNP (101 aa)) form the Fe2OG dioxygenase domain. Residues H245, D247, and H302 each coordinate Fe cation. Position 312 (R312) interacts with 2-oxoglutarate.

The protein belongs to the iron/ascorbate-dependent oxidoreductase family. In terms of assembly, monomer. It depends on Fe(2+) as a cofactor. L-ascorbate serves as cofactor. Accumulates in the trichomes of nevadensin-accumulating strains (e.g. cv. SD and cv. EMX-1) and in cv. SW (at protein level) but not in cv. MC.

Its subcellular location is the cytoplasm. The catalysed reaction is gardenin B + 2-oxoglutarate + O2 = nevadensin + formaldehyde + succinate + CO2 + H(+). The enzyme catalyses 8-hydroxysalvigenin + 2-oxoglutarate + O2 = pilosin + formaldehyde + succinate + CO2. It functions in the pathway flavonoid metabolism. Its activity is regulated as follows. Inhibited by prohexadione-calcium, a 2-oxoglutarate-dependent dioxygenase (2-ODD) inhibitor, thus leading to a decreased abundance of nevadensin (NEV) and absence of pilosin (PIL) production, but to the accumulation of gardenin B (GARD B) and 8-hydroxysalvigenin (8-OH-SALV). Functionally, oxoglutarate-dependent dioxygenase (2-ODD) acting as a flavonoid 7-O-demethylase involved in the biosynthesis of polymethoxylated flavonoids natural products such as nevadensin and salvigenin, aroma compounds which contribute to the flavor of sweet basil, and exhibit pharmacological activities such as anti-allergic, anti-oxidant, antibacterial, anti-proliferative, and anti-inflammatory effects. Catalyzes the 7-O-demethylation of methoxylated flavones; mediates the conversion of 8-hydroxysalvigenin (8-OH-SALV) to pilosin (PIL) and of gardenin B (GARD B) to nevadensin (NEV). The chain is Oxoglutarate-dependent flavonoid 7-O-demethylase 1 from Ocimum basilicum (Sweet basil).